The primary structure comprises 269 residues: HTH-type transcriptional regulator Rv0792c (269 aa).

The 69-residue stretch at 20–88 (VPASTQLAEA…QGLGTFVADP (69 aa)) folds into the HTH gntR-type domain. The segment at residues 48 to 67 (ERELIDRSGLSRVTVRAAVG) is a DNA-binding region (H-T-H motif).

In terms of assembly, homodimer.

Its activity is regulated as follows. DNA-binding activity is increased in the presence of L-arabinose and inhibited by the small molecule I-OMe-Tyrphostin. Transcriptional regulator required for survival in oxidative stress and for establishing infection in host tissues. Regulates the expression of a subset of genes involved in oxidative stress adaptation and virulence, enabling the bacteria to adapt and persist in host tissues. The chain is HTH-type transcriptional regulator Rv0792c from Mycobacterium tuberculosis (strain ATCC 25618 / H37Rv).